The sequence spans 400 residues: Probable protein phosphatase 2C 64 (400 aa).

Positions Asp47–Phe355 constitute a PPM-type phosphatase domain. Ser75 carries the post-translational modification Phosphoserine. Mn(2+) contacts are provided by Asp86, Gly87, Asp287, and Asp346.

This sequence belongs to the PP2C family. Interacts with SAUR19. Mg(2+) serves as cofactor. Requires Mn(2+) as cofactor.

The enzyme catalyses O-phospho-L-seryl-[protein] + H2O = L-seryl-[protein] + phosphate. It catalyses the reaction O-phospho-L-threonyl-[protein] + H2O = L-threonyl-[protein] + phosphate. Functionally, dephosphorylates and represses plasma membrane H(+)-ATPases (PM H(+)-ATPases, e.g. AHA1 and AHA2), thus influencing negatively plant growth and fitness. The protein is Probable protein phosphatase 2C 64 of Arabidopsis thaliana (Mouse-ear cress).